Consider the following 190-residue polypeptide: Protein LZIC (190 aa).

A coiled-coil region spans residues 2-63; that stretch reads ASRGKTETSK…SEFNDSLKKI (62 aa).

The protein belongs to the CTNNBIP1 family. As to quaternary structure, does not interact with CTNNB1.

The sequence is that of Protein LZIC (Lzic) from Mus musculus (Mouse).